The sequence spans 433 residues: Steroid C26-monooxygenase (433 aa).

Residue glycine 202 participates in substrate binding. Cysteine 377 serves as a coordination point for heme.

Belongs to the cytochrome P450 family. Heme serves as cofactor.

The enzyme catalyses cholest-4-en-3-one + 6 reduced [2Fe-2S]-[ferredoxin] + 3 O2 + 5 H(+) = (25S)-3-oxocholest-4-en-26-oate + 6 oxidized [2Fe-2S]-[ferredoxin] + 4 H2O. It functions in the pathway steroid metabolism; cholesterol degradation. Its function is as follows. Involved in the utilization of cholesterol as the sole carbon and energy source by degrading the side chain during infection. Primarily catalyzes the sequential oxidation of the terminal methyl of cholest-4-en-3-one into (25S)-26-hydroxycholest-4-en-3-one (alcohol), (25S)-26-oxocholest-4-en-3-one (aldehyde), to finally yield the carboxylic acid (25S)-3-oxocholest-4-en-26-oate. Also able to sequentially oxidize cholesterol itself, not only cholest-4-en-3-one. The polypeptide is Steroid C26-monooxygenase (cyp125) (Mycobacterium bovis (strain ATCC BAA-935 / AF2122/97)).